Here is a 469-residue protein sequence, read N- to C-terminus: Mitochondrial distribution and morphology protein 10 (469 aa).

This sequence belongs to the MDM10 family. As to quaternary structure, component of the ER-mitochondria encounter structure (ERMES) or MDM complex, composed of MMM1, MDM10, MDM12 and MDM34. Associates with the mitochondrial outer membrane sorting assembly machinery SAM(core) complex.

Its subcellular location is the mitochondrion outer membrane. In terms of biological role, component of the ERMES/MDM complex, which serves as a molecular tether to connect the endoplasmic reticulum and mitochondria. Components of this complex are involved in the control of mitochondrial shape and protein biogenesis and may function in phospholipid exchange. MDM10 is involved in the late assembly steps of the general translocase of the mitochondrial outer membrane (TOM complex). Functions in the TOM40-specific route of the assembly of outer membrane beta-barrel proteins, including the association of TOM40 with the receptor TOM22 and small TOM proteins. Can associate with the SAM(core) complex as well as the MDM12-MMM1 complex, both involved in late steps of the major beta-barrel assembly pathway, that is responsible for biogenesis of all outer membrane beta-barrel proteins. May act as a switch that shuttles between both complexes and channels precursor proteins into the TOM40-specific pathway. Plays a role in mitochondrial morphology and in the inheritance of mitochondria. This is Mitochondrial distribution and morphology protein 10 from Scheffersomyces stipitis (strain ATCC 58785 / CBS 6054 / NBRC 10063 / NRRL Y-11545) (Yeast).